A 136-amino-acid polypeptide reads, in one-letter code: Protein Tat (136 aa).

The segment at 22-37 (CTNCYCKKCCFHCPVC) is cysteine-rich. The segment at 38–48 (FTKKALGISYG) is core. The segment covering 48–57 (GRKRRGRKSA) has biased composition (basic residues). Residues 48 to 136 (GRKRRGRKSA…SGSSGSACKH (89 aa)) form a disordered region. Positions 49–55 (RKRRGRK) match the Nuclear localization signal, and RNA-binding (TAR) motif. Over residues 58–73 (VHSTNNQDPVRQQSLP) the composition is skewed to polar residues. Residues 104–120 (SSVSSGRTSGTSSSGYT) show a composition bias toward low complexity. Residues 123 to 136 (FKTSSGSSGSACKH) show a composition bias toward polar residues.

This sequence belongs to the lentiviruses Tat family. In terms of assembly, interacts with host CCNT1. Associates with the P-TEFb complex composed at least of Tat, P-TEFb (CDK9 and CCNT1), TAR RNA, RNA Pol II. Interacts with CCNT2; the resulting complex is unable to bind to TAR RNA.

Its subcellular location is the host nucleus. It localises to the host nucleolus. Transcriptional activator that increases RNA Pol II processivity, thereby increasing the level of full-length viral transcripts. Recognizes a hairpin structure at the 5'-LTR of the nascent viral mRNAs referred to as the transactivation responsive RNA element (TAR) and recruits the cyclin T1-CDK9 complex (P-TEFb complex) that will in turn hyperphosphorylate the RNA polymerase II to allow efficient elongation. The CDK9 component of P-TEFb and other Tat-activated kinases hyperphosphorylate the C-terminus of RNA Pol II that becomes stabilized and much more processive. Its function is as follows. Extracellular circulating Tat can be endocytosed by surrounding uninfected cells via the binding to several surface receptors. Endosomal low pH allows Tat to cross the endosome membrane to enter the cytosol and eventually further translocate into the nucleus, thereby inducing severe cell dysfunctions ranging from cell activation to cell death. Through. The protein is Protein Tat of Simian immunodeficiency virus (isolate TAN1) (SIV-cpz).